Here is a 746-residue protein sequence, read N- to C-terminus: MATQRVTRNSQQQNRISQGSNSRQTSLLDWMVKDKSGNFKSVLKESSSVEDSTRTDDRTEGALQVAVGYFQKGPKKASLSKDKVLEKHLTTVENVALSNGLAPEAIDILLNVALSGKFGNAVNSRILKCMIPESHISEDSVLKAVSWLCVDKCSGNTKVLFYRWLVAMFDFIDHKKQISSLYGFFFASLQDDTLCPYVCHLLYLLTKRENVKPFRVRKLLDLQAKMGMQPHLQALLSLYKFFAPTLISVSLPVRKKIFFNNSKNLWTSASLAVRLRNQGAFPEPLNLPLRPTTGRSLKRKWNSHSVIPALNSANKEYGEKTASLFDYLSSERSLPLEQLQRFPQLLESIHCLELPSQMCSVLNSPLLLHYINCVKDESILLRISYWLSQALQEECVWYNINNYEQEKEFINFLDLVIRVQCFLQEGFYSCEAFLYKSLPLWDGSSCRSQYLQLLAWIPFSSFSEVKPLLSDHLAPLFFTSSIYFKCSVLQSLQELLQNWLLWLSTDAHVQPTTDSPLETTLGGSMSSVSQLIEYTGWLCVVAMRLESSSTLLLHFILDFYEKVCDIYINYDLPIVVLFPPVIFHSALLSLDATILNQLCYIMYRYRNNWTAAKKNRYLQKAKPEFSLSSKICKEYNYYLTAMVCCLWTSRPFKAGVYTDPETIENTGGTQYKSTLNIVYHPSLLSYAASFLLQESPEEMTEHLSSIQGKKWNWYLDYLYSEGFQGLKLFIKSSVHSSVPKPEENTE.

The disordered stretch occupies residues 1 to 24 (MATQRVTRNSQQQNRISQGSNSRQ).

It belongs to the CENP-I/CTF3 family. Component of the CENPA-CAD complex, composed of CENPI, CENPK, CENPL, CENPO, CENPP, CENPQ, CENPR and CENPS. The CENPA-CAD complex interacts with the CENPA-NAC complex, at least composed of CENPA, CENPC, CENPH, CENPM, CENPN, CENPT and CENPU. Interacts with SENP6. In terms of processing, sumoylated. Sumoylated form can be polyubiquitinated by RNF4, leading to its degradation. Desumoylation by SENP6 prevents its degradation.

It is found in the nucleus. Its subcellular location is the chromosome. It localises to the centromere. In terms of biological role, component of the CENPA-CAD (nucleosome distal) complex, a complex recruited to centromeres which is involved in assembly of kinetochore proteins, mitotic progression and chromosome segregation. May be involved in incorporation of newly synthesized CENPA into centromeres via its interaction with the CENPA-NAC complex. Required for the localization of CENPF, MAD1L1 and MAD2 (MAD2L1 or MAD2L2) to kinetochores. Involved in the response of gonadal tissues to follicle-stimulating hormone. This chain is Centromere protein I (Cenpi), found in Mus musculus (Mouse).